A 412-amino-acid chain; its full sequence is MTKELIKTEASDHVIQPNNEQFSILEQLKKQQEELLQKQRELFLQDQLAHHQQQQQQQQQQLQFQQQNQLQPANNWTFTQGLVLGQISVIFIIIVFVKFFVFADSSTIPTKKSSIDASGIIVKRNKLTKKDGTSDDIIEDEKLLDTRHKISTILEKTYYDVNNHSPESLDWFNVLVAQTISQLRSEALLGDNIYHSLNDFLENTNIPEFIDKINLTEIDIGDDFPIFSNCRIKYGEDLGRLEAKIDVDLSDTLTLGISTKLLLNQPRPLTAILPVSLAVSIVRFSGCLTVSLINTKDIDLKNIEKDGQENDGSNNENEDGGGTALMFSFSPDYRLEFVVKSLIGSRAKLQDVPKISSLIESKLRTWFIERCVEPRFQVVRLPSLWPRTKNTREPINKKTSVSRSDSGTSENL.

At 1 to 81 (MTKELIKTEA…PANNWTFTQG (81 aa)) the chain is on the lumenal side. A helical membrane pass occupies residues 82–102 (LVLGQISVIFIIIVFVKFFVF). At 103-412 (ADSSTIPTKK…RSDSGTSENL (310 aa)) the chain is on the cytoplasmic side. An SMP-LTD domain is found at 165 to 382 (SPESLDWFNV…EPRFQVVRLP (218 aa)). The disordered stretch occupies residues 389-412 (KNTREPINKKTSVSRSDSGTSENL). Polar residues predominate over residues 397–412 (KKTSVSRSDSGTSENL).

It belongs to the MMM1 family. As to quaternary structure, homodimer. Component of the ER-mitochondria encounter structure (ERMES) or MDM complex, composed of MMM1, MDM10, MDM12 and MDM34. An MMM1 homodimer associates with one molecule of MDM12 on each side in a pairwise head-to-tail manner, and the SMP-LTD domains of MMM1 and MDM12 generate a continuous hydrophobic tunnel for phospholipid trafficking.

The protein resides in the endoplasmic reticulum membrane. In terms of biological role, component of the ERMES/MDM complex, which serves as a molecular tether to connect the endoplasmic reticulum (ER) and mitochondria. Components of this complex are involved in the control of mitochondrial shape and protein biogenesis, and function in nonvesicular lipid trafficking between the ER and mitochondria. The MDM12-MMM1 subcomplex functions in the major beta-barrel assembly pathway that is responsible for biogenesis of all outer membrane beta-barrel proteins, and acts in a late step after the SAM complex. The MDM10-MDM12-MMM1 subcomplex further acts in the TOM40-specific pathway after the action of the MDM12-MMM1 complex. Essential for establishing and maintaining the structure of mitochondria and maintenance of mtDNA nucleoids. The polypeptide is Maintenance of mitochondrial morphology protein 1 (Candida tropicalis (strain ATCC MYA-3404 / T1) (Yeast)).